The chain runs to 636 residues: 1-deoxy-D-xylulose-5-phosphate synthase (636 aa).

Thiamine diphosphate is bound by residues His-74 and 115 to 117 (GHS). Asp-146 contributes to the Mg(2+) binding site. Residues 147–148 (GA), Asn-175, Tyr-286, and Glu-367 contribute to the thiamine diphosphate site. Asn-175 serves as a coordination point for Mg(2+).

The protein belongs to the transketolase family. DXPS subfamily. As to quaternary structure, homodimer. It depends on Mg(2+) as a cofactor. Requires thiamine diphosphate as cofactor.

The enzyme catalyses D-glyceraldehyde 3-phosphate + pyruvate + H(+) = 1-deoxy-D-xylulose 5-phosphate + CO2. It participates in metabolic intermediate biosynthesis; 1-deoxy-D-xylulose 5-phosphate biosynthesis; 1-deoxy-D-xylulose 5-phosphate from D-glyceraldehyde 3-phosphate and pyruvate: step 1/1. Its function is as follows. Catalyzes the acyloin condensation reaction between C atoms 2 and 3 of pyruvate and glyceraldehyde 3-phosphate to yield 1-deoxy-D-xylulose-5-phosphate (DXP). The protein is 1-deoxy-D-xylulose-5-phosphate synthase of Halothermothrix orenii (strain H 168 / OCM 544 / DSM 9562).